The following is a 191-amino-acid chain: Scytalone dehydratase PfmaJ (191 aa).

Substrate-binding residues include tyrosine 25, tyrosine 45, and phenylalanine 48. Active-site residues include histidine 80 and histidine 105. Asparagine 126 provides a ligand contact to substrate.

The protein belongs to the scytalone dehydratase family. Homotrimer. Each subunit contains an active site, located in the central part of the hydrophobic core of the monomer, which functions independently.

The protein localises to the endosome. It carries out the reaction scytalone = 1,3,8-trihydroxynaphthalene + H2O. It functions in the pathway pigment biosynthesis; melanin biosynthesis. Scytalone dehydratase involved the biosynthesis of dihydroxynaphthalene (DHN)-melanin, a bluish-green pigment forming a dark layer in the conidial wall that protects the conidia from UV radiations. The first step of the pathway is the production of the pentaketide 1,3,6,8-tetrahydroxynaphthalene (1,3,6,8-THN or T4HN) by the polyketide synthase PfmaE though condensation of acetyl-CoA with malonyl-CoA. T4HN is not stable and easily oxidizes into the stable form flaviolin. T4HN is also substrate of the hydroxynaphthalene reductase PfmaG to yield scytalone. The scytalone dehydratase PfmaJ then reduces scytalone to 1,3,8-THN. 1,3,8-THN is then substrate of the hydroxynaphthalene reductase PfmaI to yield vermelone. Vermelone is further converted by the multicopper oxidase PfmaD to 1,8-DHN. Finally the laccase PFICI_06862 transforms 1,8-DHN to DHN-melanin. The roles of the 5-oxoprolinase PfmaA and the proline iminopeptidase PfmaB within the cluster have not been elucidated yet. The polypeptide is Scytalone dehydratase PfmaJ (Pestalotiopsis fici (strain W106-1 / CGMCC3.15140)).